The chain runs to 366 residues: 5-hydroxytryptamine receptor 1F (366 aa).

Topologically, residues 1 to 24 are extracellular; sequence MDFLNSSDQNLTSEELLNRMPSKI. N5 and N10 each carry an N-linked (GlcNAc...) asparagine glycan. A helical membrane pass occupies residues 25-49; sequence LVSLTLSGLALMTTTINSLVIAAII. Over 50 to 59 the chain is Cytoplasmic; sequence VTRKLHHPAN. The chain crosses the membrane as a helical span at residues 60–81; that stretch reads YLICSLAVTDFLVAVLVMPFSI. At 82 to 96 the chain is on the extracellular side; it reads VYIVRESWIMGQVVC. A disulfide bridge connects residues C96 and C172. The helical transmembrane segment at 97-119 threads the bilayer; it reads DIWLSVDITCCTCSILHLSAIAL. D103 and C107 together coordinate serotonin. A DRY motif; important for ligand-induced conformation changes motif is present at residues 120-122; the sequence is DRY. Topologically, residues 120-139 are cytoplasmic; sequence DRYRAITDAVEYARKRTPKH. The chain crosses the membrane as a helical span at residues 140-159; it reads AGIMITIVWIISVFISMPPL. The Extracellular portion of the chain corresponds to 160 to 178; the sequence is FWRHQGTSRDDECIIKHDH. Residues 179–202 traverse the membrane as a helical segment; that stretch reads IVSTIYSTFGAFYIPLALILILYY. Residues 203 to 291 lie on the Cytoplasmic side of the membrane; the sequence is KIYRAAKTLY…KISGTRERKA (89 aa). A helical transmembrane segment spans residues 292-315; sequence ATTLGLILGAFVICWLPFFVKELV. The Extracellular segment spans residues 316 to 327; that stretch reads VNVCDKCKISEE. The chain crosses the membrane as a helical span at residues 328-350; it reads MSNFLAWLGYLNSLINPLIYTIF. The NPxxY motif; important for ligand-induced conformation changes and signaling motif lies at 343-347; the sequence is NPLIY. The Cytoplasmic segment spans residues 351 to 366; the sequence is NEDFKKAFQKLVRCRC.

Belongs to the G-protein coupled receptor 1 family.

It is found in the cell membrane. Functionally, G-protein coupled receptor for 5-hydroxytryptamine (serotonin). Also functions as a receptor for various alkaloids and psychoactive substances. Receptor for lasmiditan, a drug for the treatment of acute migraine. Ligand binding causes a conformation change that triggers signaling via guanine nucleotide-binding proteins (G proteins) and modulates the activity of downstream effectors, such as adenylate cyclase. HTR1F is coupled to G(i)/G(o) G alpha proteins and mediates inhibitory neurotransmission by inhibiting adenylate cyclase activity. This chain is 5-hydroxytryptamine receptor 1F, found in Homo sapiens (Human).